The following is a 238-amino-acid chain: MEEAKVPMVELGPITFNLTLLAVCIVTILLIFGFVFWASRQMTLKPKGKQTALEYLISFVNGIGEEHLDSHLQKSYSLLLFTIFLFVAVANNLGLFTKLETTSGYNLWTSPTANLAFDLALSLFVTLLVHIEGIRRRGFGAYLKRFATPWPMTPMNLLEEFTNFLSLAIRLFGNIFAGEVVTGLIVQLANYRLYWWPIAFLVNIAWTAFSIFISCIQAFVFTKLTATYLGKKVNESEE.

5 consecutive transmembrane segments (helical) span residues 18-38 (LTLL…VFWA), 76-96 (YSLL…LGLF), 114-134 (NLAF…IEGI), 166-186 (SLAI…GLIV), and 193-213 (LYWW…SIFI).

The protein belongs to the ATPase A chain family. F-type ATPases have 2 components, CF(1) - the catalytic core - and CF(0) - the membrane proton channel. CF(1) has five subunits: alpha(3), beta(3), gamma(1), delta(1), epsilon(1). CF(0) has three main subunits: a(1), b(2) and c(9-12). The alpha and beta chains form an alternating ring which encloses part of the gamma chain. CF(1) is attached to CF(0) by a central stalk formed by the gamma and epsilon chains, while a peripheral stalk is formed by the delta and b chains.

It is found in the cell membrane. Key component of the proton channel; it plays a direct role in the translocation of protons across the membrane. The chain is ATP synthase subunit a from Streptococcus equi subsp. zooepidemicus (strain H70).